The following is a 1304-amino-acid chain: Myosin-1 (1304 aa).

Residues 1–12 (MAIVKRGVRTKN) are compositionally biased toward basic residues. A disordered region spans residues 1–24 (MAIVKRGVRTKNKQSQQPSKSGIK). Residues 36 to 730 (VGVSDLTLLS…TLFALEDMRD (695 aa)) form the Myosin motor domain. Residue 129 to 136 (GESGAGKT) coordinates ATP. Phosphoserine is present on serine 364. The tract at residues 413–496 (SIGILDIYGF…PGLFAALNDS (84 aa)) is actin-binding. IQ domains follow at residues 734-754 (HNMA…KDDA) and 755-780 (ARLI…YGNG). The 191-residue stretch at 788-978 (RRRMSMLGSR…TVTVRQGLPG (191 aa)) folds into the TH1 domain. 2 disordered regions span residues 963 to 1162 (DSYK…TYKA) and 1214 to 1304 (ECDP…DDDW). Polar residues-rich tracts occupy residues 964-983 (SYKS…SQNP) and 1001-1012 (RGSNMRSTSSYQ). Composition is skewed to low complexity over residues 1029 to 1052 (QPPV…PQAQ), 1072 to 1096 (QPHA…PQAQ), and 1120 to 1140 (PSAP…KKNV). Residues 1141–1156 (APPPPPAAASPPPKPK) are compositionally biased toward pro residues. In terms of domain architecture, SH3 spans 1155 to 1217 (PKFPTYKAAY…PAAYVVECDP (63 aa)). Low complexity-rich tracts occupy residues 1217–1227 (PPANSPAGNAK) and 1236–1256 (LNSA…NGAG). The span at 1292–1304 (DSDEEDEEDDDDW) shows a compositional bias: acidic residues.

This sequence belongs to the TRAFAC class myosin-kinesin ATPase superfamily. Myosin family. Post-translationally, phosphorylation of the TEDS site (Ser-364) is required for the polarization of the actin cytoskeleton. Phosphorylation probably activates the myosin-I ATPase activity.

It localises to the cytoplasm. Its subcellular location is the cytoskeleton. It is found in the actin patch. In terms of biological role, type-I myosin implicated in the organization of the actin cytoskeleton. Required for proper actin cytoskeleton polarization. At the cell cortex, assembles in patch-like structures together with proteins from the actin-polymerizing machinery and promotes actin assembly. Functions as actin nucleation-promoting factor (NPF) for the Arp2/3 complex. The chain is Myosin-1 (MYO1) from Debaryomyces hansenii (strain ATCC 36239 / CBS 767 / BCRC 21394 / JCM 1990 / NBRC 0083 / IGC 2968) (Yeast).